The primary structure comprises 834 residues: Enhancer of filamentation 1 (834 aa).

Residues 3–65 (ARNLMARALY…PGNRVKLLIG (63 aa)) enclose the SH3 domain. Phosphotyrosine is present on residues Y92, Y164, Y166, Y177, Y189, Y214, and Y223. At S296 the chain carries Phosphoserine. Y317 is subject to Phosphotyrosine. Disordered stretches follow at residues 328 to 402 (PPAE…DKRL) and 584 to 624 (SQMP…SERS). Residues 332–344 (TSEKANPEERDGV) show a composition bias toward basic and acidic residues. Residues 360–363 (DVVD) carry the Caspase cleavage related site motif. Residues 368–397 (LSFSSTGSTRSNMSTSSTTSKESSVSASPS) are compositionally biased toward low complexity. Phosphoserine is present on S369. Residues 710–760 (FYYDQCETHYISLLNAIDALFSCVSSAQPPRIFVAHSKFVILSAHKLVFIG) are divergent helix-loop-helix motif. Residues 710-834 (FYYDQCETHY…KRSLLEMATF (125 aa)) are required for interaction with PLK1. S780 carries the post-translational modification Phosphoserine. T804 bears the Phosphothreonine mark.

Belongs to the CAS family. Homodimer. Forms heterodimers with BCAR1/p130cas. Forms complexes with PTK2B/RAFTK, adapter protein CRKL and LYN kinase. Part of a complex composed of NEDD9, AURKA and CTTN; within the complex NEDD9 acts as a scaffold protein and is required for complex formation. Part of a ternary complex composed of SMAD3, ITCH/AIP4 and NEDD9/HEF1; within the complex NEDD9/HEF1 interacts (via N-terminus) with ITCH/AIP4; the complex mediates ubiquitination and proteasomal degradation of NEDD9/HEF1. Interacts with ID2. Interacts with CTTN (via N-terminus). Interacts with MICAL. Interacts with TXNL4/DIM1. Interacts with BCAR3 (via Ras-GEF domain). Interacts with SH2D3C isoform 1 and isoform 2. Interacts with BCAR3. Interacts with ECT2. Interacts with PTPN11/SHP-2 (via SH2 domains); the interaction is enhanced when NEDD9/CAS-L is tyrosine phosphorylated. Interacts (via C-terminus) with PLK1 (via polo box domain). Interacts with NKX2-5. Interacts with SMAD3; the interaction is inhibited by oxidation of NEDD9. Interacts with ABL1; interaction is induced by CXCL12-mediated phosphorylation of NEDD/HEF1. Interacts (via SH3 domain) with PTK2/FAK. Interacts with FYN; in the presence of PTK2. Interacts with INPPL1/SHIP2. In terms of processing, polyubiquitinated by ITCH/AIP4, leading to proteasomal degradation. Post-translationally, PTK2/FAK1 phosphorylates the protein at the YDYVHL motif (conserved among all cas proteins) following integrin stimulation. The SRC family kinases (FYN, SRC, LCK and CRK) are recruited to the phosphorylated sites and can phosphorylate other tyrosine residues. Ligation of either integrin beta-1 or B-cell antigen receptor on tonsillar B-cells and B-cell lines promotes tyrosine phosphorylation and both integrin and BCR-mediated tyrosine phosphorylation requires an intact actin network. Phosphorylation is required to recruit NEDD9 to T-cell receptor microclusters at the periphery of newly formed immunological synapses. In fibroblasts transformation with oncogene v-ABL results in an increase in tyrosine phosphorylation. Transiently phosphorylated following CD3 cross-linking and this phosphorylated form binds to CRKL and C3G. A mutant lacking the SH3 domain is phosphorylated upon CD3 cross-linking but not upon integrin beta-1 cross-linking. Tyrosine phosphorylation occurs upon stimulation of the G-protein coupled C1a calcitonin receptor. Calcitonin-stimulated tyrosine phosphorylation is mediated by calcium- and protein kinase C-dependent mechanisms and requires the integrity of the actin cytoskeleton. Phosphorylation at Ser-369 induces proteasomal degradation. Phosphorylated by LYN. Phosphorylation at Ser-780 by CSNK1D or CSNK1E, or phosphorylation of Thr-804 by CSNK1E enhances the interaction of NEDD9 with PLK1.

Its subcellular location is the cytoplasm. It localises to the cell cortex. It is found in the nucleus. The protein localises to the golgi apparatus. The protein resides in the cell projection. Its subcellular location is the lamellipodium. It localises to the cell junction. It is found in the focal adhesion. The protein localises to the cytoskeleton. The protein resides in the spindle pole. Its subcellular location is the cilium. It localises to the cilium basal body. It is found in the basolateral cell membrane. In terms of biological role, negatively regulates embryonic fibroblast migration. May play an important role in integrin beta-1 or B cell antigen receptor (BCR) mediated signaling in B- and T-cells. Integrin beta-1 stimulation leads to recruitment of various proteins including CRKl and SHPTP2 to the tyrosine phosphorylated form. Promotes adhesion and migration of lymphocytes; as a result required for the correct migration of lymphocytes to the spleen and other secondary lymphoid organs. Plays a role in the organization of T-cell F-actin cortical cytoskeleton and the centralization of T-cell receptor microclusters at the immunological synapse. Negatively regulates cilia outgrowth in polarized cysts. Modulates cilia disassembly via activation of AURKA-mediated phosphorylation of HDAC6 and subsequent deacetylation of alpha-tubulin. In conjunction with NKX2-5, positively regulates transcription of genes such as COL3A1 and MMP2, resulting in increased pulmonary endothelial fibrosis in response to hypoxia. Positively regulates RANKL-induced osteoclastogenesis. Required for the maintenance of hippocampal dendritic spines in the dentate gyrus and CA1 regions, thereby involved in spatial learning and memory. The protein is Enhancer of filamentation 1 of Canis lupus familiaris (Dog).